We begin with the raw amino-acid sequence, 729 residues long: Glutamine synthetase (729 aa).

The GS beta-grasp domain maps to 85-174 (THYTHWFQPL…IPTIFISYTG (90 aa)). Residues 179–615 (YKTPLLKALA…VLGDLAINHI (437 aa)) enclose the GS catalytic domain. Mg(2+) contacts are provided by E215, E217, E286, and E293. L-glutamate is bound by residues 337-338 (NG) and G338. H342 lines the Mg(2+) pocket. ATP is bound by residues S346 and R458. R458 contacts L-glutamate.

This sequence belongs to the glutamine synthetase family. Homohexamer. Mg(2+) serves as cofactor.

It is found in the cytoplasm. It carries out the reaction L-glutamate + NH4(+) + ATP = L-glutamine + ADP + phosphate + H(+). With respect to regulation, inhibited by L-histidine (46%), L-arginine (38%) and L-methionine-DL-sulphoximine. The activity of this enzyme is not controlled by adenylation. Functionally, catalyzes the ATP-dependent biosynthesis of glutamine from glutamate and ammonia. The chain is Glutamine synthetase from Bacteroides fragilis (strain YCH46).